A 114-amino-acid chain; its full sequence is ATP-dependent Clp protease adapter protein ClpS (114 aa).

This sequence belongs to the ClpS family. In terms of assembly, binds to the N-terminal domain of the chaperone ClpA.

In terms of biological role, involved in the modulation of the specificity of the ClpAP-mediated ATP-dependent protein degradation. In Bdellovibrio bacteriovorus (strain ATCC 15356 / DSM 50701 / NCIMB 9529 / HD100), this protein is ATP-dependent Clp protease adapter protein ClpS.